Here is an 838-residue protein sequence, read N- to C-terminus: Protein translocase subunit SecA (838 aa).

Residues glutamine 85, 103–107 (GEGKT), and aspartate 493 contribute to the ATP site. Positions 823, 825, 834, and 835 each coordinate Zn(2+).

Belongs to the SecA family. As to quaternary structure, monomer and homodimer. Part of the essential Sec protein translocation apparatus which comprises SecA, SecYEG and auxiliary proteins SecDF. Other proteins may also be involved. Zn(2+) serves as cofactor.

The protein resides in the cell membrane. Its subcellular location is the cytoplasm. It catalyses the reaction ATP + H2O + cellular proteinSide 1 = ADP + phosphate + cellular proteinSide 2.. Functionally, part of the Sec protein translocase complex. Interacts with the SecYEG preprotein conducting channel. Has a central role in coupling the hydrolysis of ATP to the transfer of proteins into and across the cell membrane, serving as an ATP-driven molecular motor driving the stepwise translocation of polypeptide chains across the membrane. This Streptococcus gordonii (strain Challis / ATCC 35105 / BCRC 15272 / CH1 / DL1 / V288) protein is Protein translocase subunit SecA.